The primary structure comprises 396 residues: Calcium-responsive transactivator (396 aa).

The N-terminal auto-inhibitory domain; necessary for interaction with SMARCA4/BRG1 stretch occupies residues 1–148 (MSVAFASARP…TLPTTSMSIS (148 aa)). Residues 50–53 (YQQI) carry the SH2-binding motif. Disordered regions lie at residues 72-162 (QSLL…SQGV), 192-280 (QAAT…GDYA), and 311-396 (SQQQ…NYQQ). Over residues 90-106 (LTQSGSSQGLHSQGSLS) the composition is skewed to low complexity. Polar residues-rich tracts occupy residues 107-122 (DAISTGLPPSSLLQGQ) and 128-147 (SHVSMQQTAPNTLPTTSMSI). Residues 149–232 (GPGYSHAGPA…GSSMMGQRPM (84 aa)) form a methionine-rich intra-molecular domain region. Low complexity-rich tracts occupy residues 199–229 (SSAQGGSQHYQGQSSIAMMGQGSQGSSMMGQ), 238–261 (SQQGSSQQYLGQEEYYGEQYSHSQ), and 311–369 (SQQQ…YGSY). The MFD domain stretch occupies residues 246 to 317 (YLGQEEYYGE…SQYSQQQAGY (72 aa)). The tract at residues 334–396 (SQQSYPGQQQ…EQGQYGNYQQ (63 aa)) is necessary for nuclear localization. Positions 353 to 356 (SQYP) match the SH2-binding motif. The SH3-binding signature appears at 371-379 (APQTAPSAQ). Residues 384-396 (YGYEQGQYGNYQQ) show a composition bias toward low complexity. The tract at residues 387-396 (EQGQYGNYQQ) is necessary for interaction with CREBBP and for the recruitment of CREBBP to the nuclear bodies. The short motif at 391–394 (YGNY) is the SH2-binding element.

The protein belongs to the SS18 family. As to quaternary structure, homodimer. Dimerization may be necessary for its function in neuronal dendritic development. Interacts (via C-terminus) with CREBBP (via N-terminus), EP300 and SMARCA4/BRG1. Interacts with the nBAF complex. Association with CREBBP facilitates transcription while the association with SMARCA4/BRG1 suppresses CREST-mediated transcription in resting neurons. Ubiquitous; with lowest levels in spleen.

It is found in the nucleus. It localises to the chromosome. The protein resides in the centromere. Its subcellular location is the kinetochore. In terms of biological role, transcriptional activator which is required for calcium-dependent dendritic growth and branching in cortical neurons. Recruits CREB-binding protein (CREBBP) to nuclear bodies. Component of the CREST-BRG1 complex, a multiprotein complex that regulates promoter activation by orchestrating a calcium-dependent release of a repressor complex and a recruitment of an activator complex. In resting neurons, transcription of the c-FOS promoter is inhibited by BRG1-dependent recruitment of a phospho-RB1-HDAC1 repressor complex. Upon calcium influx, RB1 is dephosphorylated by calcineurin, which leads to release of the repressor complex. At the same time, there is increased recruitment of CREBBP to the promoter by a CREST-dependent mechanism, which leads to transcriptional activation. The CREST-BRG1 complex also binds to the NR2B promoter, and activity-dependent induction of NR2B expression involves a release of HDAC1 and recruitment of CREBBP. This Homo sapiens (Human) protein is Calcium-responsive transactivator (SS18L1).